The following is a 126-amino-acid chain: Thioredoxin H-type 1 (126 aa).

The Thioredoxin domain maps to 2-120 (AANDATSSEE…LQQTIVKHAA (119 aa)). Active-site nucleophile residues include Cys46 and Cys49. Cys46 and Cys49 are oxidised to a cystine.

It belongs to the thioredoxin family. Plant H-type subfamily.

The protein localises to the cytoplasm. Functionally, participates in various redox reactions through the reversible oxidation of the active center dithiol to a disulfide. The H form is known to activate a number of cytosolic enzymes. The protein is Thioredoxin H-type 1 of Nicotiana tabacum (Common tobacco).